Reading from the N-terminus, the 123-residue chain is Ribosome-binding factor A (123 aa).

It belongs to the RbfA family. In terms of assembly, monomer. Binds 30S ribosomal subunits, but not 50S ribosomal subunits or 70S ribosomes.

Its subcellular location is the cytoplasm. One of several proteins that assist in the late maturation steps of the functional core of the 30S ribosomal subunit. Associates with free 30S ribosomal subunits (but not with 30S subunits that are part of 70S ribosomes or polysomes). Required for efficient processing of 16S rRNA. May interact with the 5'-terminal helix region of 16S rRNA. The protein is Ribosome-binding factor A of Lactobacillus johnsonii (strain CNCM I-12250 / La1 / NCC 533).